The sequence spans 99 residues: Aspartyl/glutamyl-tRNA(Asn/Gln) amidotransferase subunit C (99 aa).

This sequence belongs to the GatC family. As to quaternary structure, heterotrimer of A, B and C subunits.

The catalysed reaction is L-glutamyl-tRNA(Gln) + L-glutamine + ATP + H2O = L-glutaminyl-tRNA(Gln) + L-glutamate + ADP + phosphate + H(+). It catalyses the reaction L-aspartyl-tRNA(Asn) + L-glutamine + ATP + H2O = L-asparaginyl-tRNA(Asn) + L-glutamate + ADP + phosphate + 2 H(+). Its function is as follows. Allows the formation of correctly charged Asn-tRNA(Asn) or Gln-tRNA(Gln) through the transamidation of misacylated Asp-tRNA(Asn) or Glu-tRNA(Gln) in organisms which lack either or both of asparaginyl-tRNA or glutaminyl-tRNA synthetases. The reaction takes place in the presence of glutamine and ATP through an activated phospho-Asp-tRNA(Asn) or phospho-Glu-tRNA(Gln). The polypeptide is Aspartyl/glutamyl-tRNA(Asn/Gln) amidotransferase subunit C (Burkholderia lata (strain ATCC 17760 / DSM 23089 / LMG 22485 / NCIMB 9086 / R18194 / 383)).